The sequence spans 351 residues: Methylxanthine N1-demethylase NdmA (351 aa).

Residues 17 to 125 (WHPVCTVTEL…CEERYGLIWI (109 aa)) form the Rieske domain. 4 residues coordinate [2Fe-2S] cluster: C62, H64, C81, and H84.

It depends on [2Fe-2S] cluster as a cofactor.

It carries out the reaction caffeine + NADH + O2 + H(+) = theobromine + formaldehyde + NAD(+) + H2O. The catalysed reaction is caffeine + NADPH + O2 + H(+) = theobromine + formaldehyde + NADP(+) + H2O. It catalyses the reaction theophylline + NADH + O2 + H(+) = 3-methylxanthine + formaldehyde + NAD(+) + H2O. The enzyme catalyses theophylline + NADPH + O2 + H(+) = 3-methylxanthine + formaldehyde + NADP(+) + H2O. It carries out the reaction 1,7-dimethylxanthine + NADH + O2 + H(+) = 7-methylxanthine + formaldehyde + NAD(+) + H2O. The catalysed reaction is 1,7-dimethylxanthine + NADPH + O2 + H(+) = 7-methylxanthine + formaldehyde + NADP(+) + H2O. The protein operates within alkaloid degradation. Involved in the caffeine degradation, which is the essential first step for assimilating the carbon and nitrogen in caffeine. Catalyzes the N1-demethylation of caffeine to produce theobromine and formaldehyde. Also catalyzes the N1-demethylation of theophylline, paraxanthine, and 1-methylxanthine to 3-methylxanthine, 7-methylxanthine, and xanthine, respectively. NADH is the preferred substrate. The protein is Methylxanthine N1-demethylase NdmA (ndmA) of Pseudomonas putida (Arthrobacter siderocapsulatus).